Consider the following 226-residue polypeptide: Urease accessory protein UreF (226 aa).

Belongs to the UreF family. As to quaternary structure, ureD, UreF and UreG form a complex that acts as a GTP-hydrolysis-dependent molecular chaperone, activating the urease apoprotein by helping to assemble the nickel containing metallocenter of UreC. The UreE protein probably delivers the nickel.

The protein localises to the cytoplasm. Required for maturation of urease via the functional incorporation of the urease nickel metallocenter. This Burkholderia cenocepacia (strain ATCC BAA-245 / DSM 16553 / LMG 16656 / NCTC 13227 / J2315 / CF5610) (Burkholderia cepacia (strain J2315)) protein is Urease accessory protein UreF.